A 385-amino-acid polypeptide reads, in one-letter code: MKLPSLLSLGVAASTTIVAAVPDQKPIGDTIEDVHLGKFLIELGPGDTRWVTEEEKWGLRRDGRRFFDITAEAEQNVFPKTFAQTTVTFPSELQNVAHVKKLASSLSKNRLQTFLTKFTSFHTRYYKSESGRQSAIWLFEQIEKIIQESSATGARVEKFEHPWGQFSIIATIPGQTNKTVVVGAHQDSINLLMPSILPAPGADDDGSGTATILEALRILLKSEAVAQGKAPNTVEFHWYSAEEAGLLGSQAVFAQYKQDNRDVKSMLQQDMTGYSKGTMNAGHVDSVGIITDFVDEGLTNFITKVVTGYCGISYVLTKCGYACSDHASASRYGYPSAFVIESKFEYSSKLIHTTRDEVSSLDFDHMLQHAKMTLGLVYELAFADL.

A signal peptide spans 1–20 (MKLPSLLSLGVAASTTIVAA). Positions 21-87 (VPDQKPIGDT…FPKTFAQTTV (67 aa)) are excised as a propeptide. An N-linked (GlcNAc...) asparagine glycan is attached at N177. Zn(2+) is bound by residues H185, D204, E243, and D270. C319 and C323 form a disulfide bridge. Position 352 (H352) interacts with Zn(2+).

It belongs to the peptidase M28 family. M28E subfamily. Monomer. It depends on Zn(2+) as a cofactor.

It is found in the secreted. In terms of biological role, extracellular aminopeptidase that allows assimilation of proteinaceous substrates. This Ajellomyces capsulatus (strain NAm1 / WU24) (Darling's disease fungus) protein is Leucine aminopeptidase 1 (LAP1).